We begin with the raw amino-acid sequence, 347 residues long: MNRKVAIVTGTNSNLGLNIVFRLIETEDTNVRLTIVVTSRTLPRVQEVINQIKDFYNKSGRVEDLEIDFDYLLVDFTNMVSVLNAYYDINKKYRAINYLFVNAAQGIFDGIDWIGAVKEVFTNPLEAVTNPTYKIQLVGVKSKDDMGLIFQANVFGPYYFISKILPQLTRGKAYIVWISSIMSDPKYLSLNDIELLKTNASYEGSKRLVDLLHLATYKDLKKLGINQYVVQPGIFTSHSFSEYLNFFTYFGMLCLFYLARLLGSPWHNIDGYKAANAPVYVTRLANPNFEKQDVKYGSATSRDGMPYIKTQEIDPTGMSDVFAYIQKKKLEWDEKLKDQIVETRTPI.

NADP(+) contacts are provided by leucine 15, threonine 38, and arginine 44. Active-site proton donor residues include serine 179 and tyrosine 202. NADP(+) is bound by residues tyrosine 202, lysine 206, and serine 237. Lysine 206 functions as the Lowers pKa of active site Tyr in the catalytic mechanism. Residue threonine 345 is modified to Phosphothreonine.

The protein belongs to the short-chain dehydrogenases/reductases (SDR) family. ERG27 subfamily. In terms of assembly, heterotetramer of ERG25, ERG26, ERG27 and ERG28. ERG28 acts as a scaffold to tether ERG27 and other 4,4-demethylation-related enzymes, forming a demethylation enzyme complex, in the endoplasmic reticulum. Interacts with ERG25 and ERG28. Also interacts with ERG7, but only in lipid particles.

Its subcellular location is the endoplasmic reticulum membrane. The protein resides in the lipid droplet. The catalysed reaction is 3-dehydro-4alpha-methylzymosterol + NADPH + H(+) = 4alpha-methylzymosterol + NADP(+). The protein operates within steroid biosynthesis; zymosterol biosynthesis; zymosterol from lanosterol: step 5/6. 3-keto-steroid reductase; part of the third module of ergosterol biosynthesis pathway that includes the late steps of the pathway. ERG27 is a catalytic component of the C-4 demethylation complex that catalyze the reduction of the keto group on the C-3. The third module or late pathway involves the ergosterol synthesis itself through consecutive reactions that mainly occur in the endoplasmic reticulum (ER) membrane. Firstly, the squalene synthase ERG9 catalyzes the condensation of 2 farnesyl pyrophosphate moieties to form squalene, which is the precursor of all steroids. Squalene synthase is crucial for balancing the incorporation of farnesyl diphosphate (FPP) into sterol and nonsterol isoprene synthesis. Secondly, the squalene epoxidase ERG1 catalyzes the stereospecific oxidation of squalene to (S)-2,3-epoxysqualene, which is considered to be a rate-limiting enzyme in steroid biosynthesis. Then, the lanosterol synthase ERG7 catalyzes the cyclization of (S)-2,3 oxidosqualene to lanosterol, a reaction that forms the sterol core. In the next steps, lanosterol is transformed to zymosterol through a complex process involving various demethylation, reduction and desaturation reactions. The lanosterol 14-alpha-demethylase ERG11 (also known as CYP51) catalyzes C14-demethylation of lanosterol to produce 4,4'-dimethyl cholesta-8,14,24-triene-3-beta-ol, which is critical for ergosterol biosynthesis. The C-14 reductase ERG24 reduces the C14=C15 double bond of 4,4-dimethyl-cholesta-8,14,24-trienol to produce 4,4-dimethyl-cholesta-8,24-dienol. 4,4-dimethyl-cholesta-8,24-dienol is substrate of the C-4 demethylation complex ERG25-ERG26-ERG27 in which ERG25 catalyzes the three-step monooxygenation required for the demethylation of 4,4-dimethyl and 4alpha-methylsterols, ERG26 catalyzes the oxidative decarboxylation that results in a reduction of the 3-beta-hydroxy group at the C-3 carbon to an oxo group, and ERG27 is responsible for the reduction of the keto group on the C-3. ERG28 has a role as a scaffold to help anchor ERG25, ERG26 and ERG27 to the endoplasmic reticulum and ERG29 regulates the activity of the iron-containing C4-methylsterol oxidase ERG25. Then, the sterol 24-C-methyltransferase ERG6 catalyzes the methyl transfer from S-adenosyl-methionine to the C-24 of zymosterol to form fecosterol. The C-8 sterol isomerase ERG2 catalyzes the reaction which results in unsaturation at C-7 in the B ring of sterols and thus converts fecosterol to episterol. The sterol-C5-desaturase ERG3 then catalyzes the introduction of a C-5 double bond in the B ring to produce 5-dehydroepisterol. The C-22 sterol desaturase ERG5 further converts 5-dehydroepisterol into ergosta-5,7,22,24(28)-tetraen-3beta-ol by forming the C-22(23) double bond in the sterol side chain. Finally, ergosta-5,7,22,24(28)-tetraen-3beta-ol is substrate of the C-24(28) sterol reductase ERG4 to produce ergosterol. Its function is as follows. Facilitates the association of ERG7 with lipid particles preventing its digestion in the endoplasmic reticulum and the lipid particles. In Saccharomyces cerevisiae (strain ATCC 204508 / S288c) (Baker's yeast), this protein is 3-keto-steroid reductase ERG27.